A 199-amino-acid chain; its full sequence is Chaperone protein TorD (199 aa).

It belongs to the TorD/DmsD family. TorD subfamily.

The protein localises to the cytoplasm. Its function is as follows. Involved in the biogenesis of TorA. Acts on TorA before the insertion of the molybdenum cofactor and, as a result, probably favors a conformation of the apoenzyme that is competent for acquiring the cofactor. The protein is Chaperone protein TorD of Escherichia coli O81 (strain ED1a).